The chain runs to 338 residues: Ankyrin-repeat domain containing transcription coregulator asaA (338 aa).

The segment covering 1 to 10 (MGAPHEEIQA) has biased composition (basic and acidic residues). Disordered stretches follow at residues 1–70 (MGAP…LRST) and 112–137 (ASSV…PFID). A compositionally biased stretch (basic residues) spans 11–33 (LKRRREQNRLAQRRRRDNVRRRL). The segment covering 42 to 70 (SPASASQTSLCSSTDSRVTLNPHQSLRST) has biased composition (polar residues). A compositionally biased stretch (low complexity) spans 112-130 (ASSVSPSSSAGPLSSSPSP). ANK repeat units lie at residues 235–264 (RWTT…DPNA), 268–297 (EGAT…DPTL), and 301–330 (AGWL…PVDY).

The protein operates within secondary metabolite biosynthesis. Functionally, transcription coregulator involved in regulation of gene cluster that mediates the biosynthesis of aspergillic acid, a hydroxamic acid-containing pyrazinone with aliphatic side chains that originates from leucine (Leu) and isoleucine (Ile). Aspergillic acid has antibiotic properties and was shown to be lethal to mice. The protein is Ankyrin-repeat domain containing transcription coregulator asaA of Aspergillus flavus (strain ATCC 200026 / FGSC A1120 / IAM 13836 / NRRL 3357 / JCM 12722 / SRRC 167).